Here is a 308-residue protein sequence, read N- to C-terminus: Probable manganese-dependent inorganic pyrophosphatase (308 aa).

The Mn(2+) site is built by His9, Asp13, Asp15, Asp75, His97, and Asp149.

The protein belongs to the PPase class C family. The cofactor is Mn(2+).

It localises to the cytoplasm. The enzyme catalyses diphosphate + H2O = 2 phosphate + H(+). This chain is Probable manganese-dependent inorganic pyrophosphatase, found in Listeria monocytogenes serotype 4b (strain CLIP80459).